Here is a 71-residue protein sequence, read N- to C-terminus: Cell division protein FtsB (71 aa).

At 1-3 the chain is on the cytoplasmic side; it reads MKI. The helical transmembrane segment at 4 to 21 threads the bilayer; that stretch reads LKIFLLSLLFWLQYSLWF. Residues 22 to 71 are Extracellular-facing; it reads GKNGVLDFIKIYRRVTIEKKNNEYLDMRNNQIILEIENFNNHINKDKKKT.

This sequence belongs to the FtsB family.

It localises to the cell membrane. Its function is as follows. Essential cell division protein. May link together the upstream cell division proteins, which are predominantly cytoplasmic, with the downstream cell division proteins, which are predominantly extracellular. This chain is Cell division protein FtsB, found in Buchnera aphidicola subsp. Acyrthosiphon pisum (strain APS) (Acyrthosiphon pisum symbiotic bacterium).